The primary structure comprises 131 residues: Bacteriohemerythrin (131 aa).

8 residues coordinate Fe cation: His-20, Glu-23, His-56, Glu-60, His-75, His-79, His-117, and Asp-122.

It belongs to the hemerythrin family. In terms of assembly, monomer.

Its function is as follows. Oxygen-binding protein. May be involved in a storage mechanism or for delivery to oxygen-requiring enzymes. The oxygen-binding site contains two iron atoms. In Aquifex aeolicus (strain VF5), this protein is Bacteriohemerythrin.